The following is a 335-amino-acid chain: MKIGVIGSGSFGTALGSLLADKGYEVTLWCRNDSQVESINRNHINNKHLPNFTLPEKLTASKDLRNVVQGKDMIVSSPPSHALSEVLREIKEYLPEKVPIVSASKGIENGTLRLVSEIFESELPEKYHSYLSYLSGPSFAKEIIQKVPTIVSIASKNETTARKVQEIFSFLYFRTYWTPDVIGVEVGGSLKNVIALAAGVSDGLGFGQNTRAALITRGLNEITKIGLKLGADPMTFLGPSGMGDLILTCCGEQSRNRTVGFRLGKGETLEQILSSMNEVAEGVKTTQSAYELSQKLGIEMAITNEVYKMLYEGKNPREVVKDLMKRDLKREGVSV.

Residues Ser10, Phe11, Arg31, and Lys105 each coordinate NADPH. Lys105, Gly136, and Ser138 together coordinate sn-glycerol 3-phosphate. Ala140 contacts NADPH. Sn-glycerol 3-phosphate is bound by residues Lys191, Asp244, Ser254, Arg255, and Asn256. Lys191 serves as the catalytic Proton acceptor. NADPH is bound at residue Arg255. Positions 279 and 281 each coordinate NADPH.

This sequence belongs to the NAD-dependent glycerol-3-phosphate dehydrogenase family.

The protein resides in the cytoplasm. It carries out the reaction sn-glycerol 3-phosphate + NAD(+) = dihydroxyacetone phosphate + NADH + H(+). The catalysed reaction is sn-glycerol 3-phosphate + NADP(+) = dihydroxyacetone phosphate + NADPH + H(+). The protein operates within membrane lipid metabolism; glycerophospholipid metabolism. In terms of biological role, catalyzes the reduction of the glycolytic intermediate dihydroxyacetone phosphate (DHAP) to sn-glycerol 3-phosphate (G3P), the key precursor for phospholipid synthesis. The chain is Glycerol-3-phosphate dehydrogenase [NAD(P)+] from Leptospira interrogans serogroup Icterohaemorrhagiae serovar copenhageni (strain Fiocruz L1-130).